The primary structure comprises 160 residues: Nucleotide-binding protein VS_1405 (160 aa).

Belongs to the YajQ family.

Nucleotide-binding protein. This Vibrio atlanticus (strain LGP32) (Vibrio splendidus (strain Mel32)) protein is Nucleotide-binding protein VS_1405.